Reading from the N-terminus, the 471-residue chain is Plant intracellular Ras-group-related LRR protein 2 (471 aa).

Residues 106–133 are a coiled coil; the sequence is VVRLDEVHDSYEKKLKDTEEELSRVYST. LRR repeat units lie at residues 159-182, 183-205, 206-229, 231-251, 253-275, 276-298, 300-321, 324-346, 347-369, and 371-392; these read GGTV…FWKV, VGLV…ISKL, KKLE…GMLL, LRIL…IAHC, SLVE…GYGL, QNLE…ISEM, NLKY…IGRL, LEVL…ITDL, TNLR…FYRL, and KLEK…VATQ. The GVYW; degenerate motif lies at 393–405; the sequence is GAEVVREFMRKRW.

The protein belongs to the SHOC2 family. As to expression, widely expressed but preferentially in roots.

In terms of biological role, leucine-rich repeat protein that likely mediates protein interactions, possibly in the context of signal transduction. This Arabidopsis thaliana (Mouse-ear cress) protein is Plant intracellular Ras-group-related LRR protein 2 (PIRL2).